Consider the following 230-residue polypeptide: Orotidine 5'-phosphate decarboxylase (230 aa).

Substrate is bound by residues Asp12, Lys34, Asp61–Thr70, Thr116, Arg177, Gln186, and Arg207. Lys63 (proton donor) is an active-site residue.

It belongs to the OMP decarboxylase family. Type 1 subfamily. As to quaternary structure, homodimer.

The catalysed reaction is orotidine 5'-phosphate + H(+) = UMP + CO2. The protein operates within pyrimidine metabolism; UMP biosynthesis via de novo pathway; UMP from orotate: step 2/2. In terms of biological role, catalyzes the decarboxylation of orotidine 5'-monophosphate (OMP) to uridine 5'-monophosphate (UMP). The chain is Orotidine 5'-phosphate decarboxylase from Rhizobium rhizogenes (strain K84 / ATCC BAA-868) (Agrobacterium radiobacter).